Consider the following 520-residue polypeptide: 3-phosphoshikimate 1-carboxyvinyltransferase, chloroplastic (520 aa).

Residues 1-76 (MAQVSRICNG…KVMSSVSTAE (76 aa)) constitute a chloroplast transit peptide. Positions 20-39 (LSKSSQRKSPLSVSLKTQQH) are disordered. 3 residues coordinate 3-phosphoshikimate: Lys99, Ser100, and Arg104. Residue Lys99 coordinates phosphoenolpyruvate. 2 residues coordinate phosphoenolpyruvate: Gly177 and Arg207. 6 residues coordinate 3-phosphoshikimate: Ser254, Ser255, Gln256, Ser282, Asp407, and Lys434. Gln256 provides a ligand contact to phosphoenolpyruvate. Asp407 functions as the Proton acceptor in the catalytic mechanism. Arg438, Arg480, and Lys505 together coordinate phosphoenolpyruvate.

This sequence belongs to the EPSP synthase family.

The protein resides in the plastid. The protein localises to the chloroplast. It catalyses the reaction 3-phosphoshikimate + phosphoenolpyruvate = 5-O-(1-carboxyvinyl)-3-phosphoshikimate + phosphate. The protein operates within metabolic intermediate biosynthesis; chorismate biosynthesis; chorismate from D-erythrose 4-phosphate and phosphoenolpyruvate: step 6/7. Catalyzes the transfer of the enolpyruvyl moiety of phosphoenolpyruvate (PEP) to the 5-hydroxyl of shikimate-3-phosphate (S3P) to produce enolpyruvyl shikimate-3-phosphate and inorganic phosphate. This Arabidopsis thaliana (Mouse-ear cress) protein is 3-phosphoshikimate 1-carboxyvinyltransferase, chloroplastic.